The primary structure comprises 43 residues: Protein PsbN (43 aa).

The chain crosses the membrane as a helical span at residues 7-29 (IVIFVSSLLLGITTYSVYTAFGP).

It belongs to the PsbN family.

The protein resides in the plastid. It localises to the chloroplast thylakoid membrane. May play a role in photosystem I and II biogenesis. In Phaeodactylum tricornutum (strain CCAP 1055/1), this protein is Protein PsbN.